A 239-amino-acid chain; its full sequence is Small ribosomal subunit protein eS6A (239 aa).

A phosphoserine mark is found at Ser-235 and Ser-236.

The protein belongs to the eukaryotic ribosomal protein eS6 family. Component of the small ribosomal subunit (SSU). Mature yeast ribosomes consist of a small (40S) and a large (60S) subunit. The 40S small subunit contains 1 molecule of ribosomal RNA (18S rRNA) and at least 33 different proteins. The large 60S subunit contains 3 rRNA molecules (25S, 5.8S and 5S rRNA) and at least 46 different proteins. Interacts with snoRNA U3. uS11 interacts with MPP10. Component of the ribosomal small subunit (SSU) processome composed of at least 40 protein subunits and snoRNA U3. Phosphorylated.

The protein resides in the cytoplasm. Component of the ribosome, a large ribonucleoprotein complex responsible for the synthesis of proteins in the cell. The small ribosomal subunit (SSU) binds messenger RNAs (mRNAs) and translates the encoded message by selecting cognate aminoacyl-transfer RNA (tRNA) molecules. The large subunit (LSU) contains the ribosomal catalytic site termed the peptidyl transferase center (PTC), which catalyzes the formation of peptide bonds, thereby polymerizing the amino acids delivered by tRNAs into a polypeptide chain. The nascent polypeptides leave the ribosome through a tunnel in the LSU and interact with protein factors that function in enzymatic processing, targeting, and the membrane insertion of nascent chains at the exit of the ribosomal tunnel. eS6 is involved in nucleolar processing of pre-18S ribosomal RNA and ribosome assembly. In Schizosaccharomyces pombe (strain 972 / ATCC 24843) (Fission yeast), this protein is Small ribosomal subunit protein eS6A (rps601).